Consider the following 311-residue polypeptide: Transcriptional repressor scratch 2 (311 aa).

Residues 1–20 (MPRSFLVKKIKADGFQCSGV) are SNAG domain. 2 disordered regions span residues 71–90 (PAYP…PQSS) and 120–156 (RRRA…ATAG). Residues 124-146 (GAGGDAAGAGDAGGGGGGGGGGE) are compositionally biased toward gly residues. C2H2-type zinc fingers lie at residues 161 to 183 (HACA…KQTH), 192 to 214 (RKCP…VLTH), 218 to 240 (HKCG…MRSH), and 246 to 268 (FGCA…MQTH). A C2H2-type 5; atypical zinc finger spans residues 274-297 (YRCRQCDKSFALKSYLHKHCEAAC).

This sequence belongs to the snail C2H2-type zinc-finger protein family.

It localises to the nucleus. In terms of biological role, may be involved in transcriptional regulation. The sequence is that of Transcriptional repressor scratch 2 (Scrt2) from Mus musculus (Mouse).